Here is a 28-residue protein sequence, read N- to C-terminus: uncharacterized protein (28 aa).

This is an uncharacterized protein from Escherichia coli (Bacteriophage T4).